We begin with the raw amino-acid sequence, 499 residues long: Tyrosine-protein kinase Blk (499 aa).

Positions 1 to 34 are disordered; that stretch reads MGLLSSKRQVSEKGKGWSPVKIRTQDKAPPPLPP. A lipid anchor (N-myristoyl glycine) is attached at Gly2. One can recognise an SH3 domain in the interval 52–112; the sequence is EEERFVVALF…PSNFVAPVET (61 aa). In terms of domain architecture, SH2 spans 118 to 214; sequence WFFRTISRKD…GLCQKLTLPC (97 aa). Residues 235 to 488 form the Protein kinase domain; the sequence is LKLVRKLGSG…FLQSVLEDFY (254 aa). Residues 241-249 and Lys263 each bind ATP; that span reads LGSGQFGEV. The active-site Proton acceptor is Asp354. At Tyr383 the chain carries Phosphotyrosine; by autocatalysis.

This sequence belongs to the protein kinase superfamily. Tyr protein kinase family. SRC subfamily. In terms of assembly, interacts with CBL (via SH2 domain). Interacts with CD79A and CD79B (via SH2 domain). Post-translationally, phosphorylated on tyrosine residues after antibody-mediated surface engagement of the B-cell antigen receptor (BCR). In terms of processing, ubiquitination of activated BLK by the UBE3A ubiquitin protein ligase leads to its degradation by the ubiquitin-proteasome pathway. As to expression, expressed in immature Vgamma2 gamma-delta T-cells (at protein level). Expressed in the B-cell lineage.

The protein resides in the cell membrane. It catalyses the reaction L-tyrosyl-[protein] + ATP = O-phospho-L-tyrosyl-[protein] + ADP + H(+). Its activity is regulated as follows. Antibody-mediated surface engagement of the B-cell antigen receptor (BCR) which results in the phosphorylation of BLK on tyrosine residues, stimulates the enzymatic activity. Functionally, non-receptor tyrosine kinase involved in B-lymphocyte development, differentiation and signaling. B-cell receptor (BCR) signaling requires a tight regulation of several protein tyrosine kinases and phosphatases, and associated coreceptors. Binding of antigen to the B-cell antigen receptor (BCR) triggers signaling that ultimately leads to B-cell activation. Signaling through BLK plays an important role in transmitting signals through surface immunoglobulins and supports the pro-B to pre-B transition, as well as the signaling for growth arrest and apoptosis downstream of B-cell receptor. Specifically binds and phosphorylates CD79A at 'Tyr-188'and 'Tyr-199', as well as CD79B at 'Tyr-196' and 'Tyr-207'. Also phosphorylates the immunoglobulin G receptor FCGR2. With FYN and LYN, plays an essential role in pre-B-cell receptor (pre-BCR)-mediated NF-kappa-B activation. Also contributes to BTK activation by indirectly stimulating BTK intramolecular autophosphorylation. In pancreatic islets, acts as a modulator of beta-cells function through the up-regulation of PDX1 and NKX6-1 and consequent stimulation of insulin secretion in response to glucose. Phosphorylates CGAS, promoting retention of CGAS in the cytosol. The protein is Tyrosine-protein kinase Blk (Blk) of Mus musculus (Mouse).